A 382-amino-acid chain; its full sequence is Adaptive-response sensory kinase SasA (382 aa).

Positions 160-382 (MLAHDLRSPL…CFHFTLPVYR (223 aa)) constitute a Histidine kinase domain. A Phosphohistidine; by autocatalysis modification is found at His-163.

As to quaternary structure, homooligomerizes. Interacts with KaiC. Participates in the KaiABC clock complex, whose core is composed of a KaiC homohexamer, 6 KaiB and up to 6 KaiA dimers. SasA and KaiB(fs) compete to bind to KaiC.

The catalysed reaction is ATP + protein L-histidine = ADP + protein N-phospho-L-histidine.. Its function is as follows. Member of the two-component regulatory system SasA/RpaA involved in genome-wide circadian gene expression. One of several clock output pathways. Participates in the Kai clock protein complex, the main circadian regulator in cyanobacteria, via its interaction with KaiC. KaiC enhances the autophosphorylation activity of SasA, which then transfers its phosphate group to RpaA to activate it. In addition to its output function, recruits fold-shifted KaiB (KaiB(fs)) to KaiC to cooperatively form the KaiB(6):KaiC(6) complex (independent of SasA kinase activity). Required for robustness of the circadian rhythm of gene expression and is involved in clock output, also required for adaptation to light/dark cycles. The protein is Adaptive-response sensory kinase SasA of Crocosphaera subtropica (strain ATCC 51142 / BH68) (Cyanothece sp. (strain ATCC 51142)).